The chain runs to 362 residues: Dihydroorotate dehydrogenase (quinone) (362 aa).

FMN contacts are provided by residues 62-66 (AGYDK) and Thr-86. Substrate is bound at residue Lys-66. Substrate is bound at residue 111–115 (NRLGF). Asn-139 and Asn-170 together coordinate FMN. Asn-170 serves as a coordination point for substrate. Catalysis depends on Ser-173, which acts as the Nucleophile. Asn-175 serves as a coordination point for substrate. FMN-binding residues include Lys-215 and Ser-243. 244 to 245 (NT) serves as a coordination point for substrate. FMN is bound by residues Gly-266, Gly-295, and 316-317 (YS).

The protein belongs to the dihydroorotate dehydrogenase family. Type 2 subfamily. Monomer. FMN is required as a cofactor.

Its subcellular location is the cell membrane. The catalysed reaction is (S)-dihydroorotate + a quinone = orotate + a quinol. The protein operates within pyrimidine metabolism; UMP biosynthesis via de novo pathway; orotate from (S)-dihydroorotate (quinone route): step 1/1. Its function is as follows. Catalyzes the conversion of dihydroorotate to orotate with quinone as electron acceptor. The protein is Dihydroorotate dehydrogenase (quinone) of Rhizobium meliloti (strain 1021) (Ensifer meliloti).